We begin with the raw amino-acid sequence, 296 residues long: MNTAMEETQRIEQFLRKALVSERKHGYLIGVSGGLDSAVVLKLLVQAVGKENVLGLILPDRDTEKKSTTLARSLLEQEKVPYKVISMTPLLRHLGVYKDMPLFLLPTRGLKESIVRRFYNDYTKKLNKPVFFAQWEEPPTQLPYFYEGIAYYRIKHRVRMATLYYYAEKNDYLLVGCTNLSERLIGFYVKYGDDVCDVAPIAHLYKTEVRQLSEYLSVPEDIRNRPPSPDLIPGITDEYSLGINYETLDQILAGLEEGKTAEDLKQLFPADIVELVINQVKFTQKLEGKPYMLKRA.

30–37 lines the ATP pocket; that stretch reads GVSGGLDS. Asp-36 contacts Mg(2+). Arg-157 is a deamido-NAD(+) binding site. Glu-182 serves as a coordination point for Mg(2+). Residues Lys-190 and Asp-197 each contribute to the deamido-NAD(+) site. Positions 206 and 228 each coordinate ATP.

The protein belongs to the NAD synthetase family. In terms of assembly, homodimer.

It carries out the reaction deamido-NAD(+) + NH4(+) + ATP = AMP + diphosphate + NAD(+) + H(+). It functions in the pathway cofactor biosynthesis; NAD(+) biosynthesis; NAD(+) from deamido-NAD(+) (ammonia route): step 1/1. In terms of biological role, catalyzes the ATP-dependent amidation of deamido-NAD to form NAD. Uses ammonia as a nitrogen source. The sequence is that of NH(3)-dependent NAD(+) synthetase from Coprothermobacter proteolyticus (strain ATCC 35245 / DSM 5265 / OCM 4 / BT).